Reading from the N-terminus, the 58-residue chain is Large ribosomal subunit protein bL32c (58 aa).

The protein belongs to the bacterial ribosomal protein bL32 family.

It is found in the plastid. Its subcellular location is the chloroplast. The chain is Large ribosomal subunit protein bL32c from Chaetosphaeridium globosum (Charophycean green alga).